A 233-amino-acid chain; its full sequence is DnaA regulatory inactivator Hda (233 aa).

The protein belongs to the DnaA family. HdA subfamily. The active form seems to be an ADP-bound monomer. Forms the RIDA complex (regulatory inactivation of DnaA) of ATP-DnaA, ADP-Hda and the DNA-loaded beta sliding clamp (dnaN).

Functionally, mediates the interaction of DNA replication initiator protein DnaA with DNA polymerase subunit beta sliding clamp (dnaN). Stimulates hydrolysis of ATP-DnaA to ADP-DnaA, rendering DnaA inactive for reinitiation, a process called regulatory inhibition of DnaA or RIDA. In Photorhabdus laumondii subsp. laumondii (strain DSM 15139 / CIP 105565 / TT01) (Photorhabdus luminescens subsp. laumondii), this protein is DnaA regulatory inactivator Hda.